The primary structure comprises 372 residues: Ribosomal RNA small subunit methyltransferase H (372 aa).

S-adenosyl-L-methionine is bound by residues 78-80, aspartate 97, tyrosine 124, aspartate 148, and glutamine 155; that span reads GGH.

It belongs to the methyltransferase superfamily. RsmH family.

Its subcellular location is the cytoplasm. The catalysed reaction is cytidine(1402) in 16S rRNA + S-adenosyl-L-methionine = N(4)-methylcytidine(1402) in 16S rRNA + S-adenosyl-L-homocysteine + H(+). In terms of biological role, specifically methylates the N4 position of cytidine in position 1402 (C1402) of 16S rRNA. This chain is Ribosomal RNA small subunit methyltransferase H, found in Mycobacterium leprae (strain Br4923).